Here is a 203-residue protein sequence, read N- to C-terminus: MTQPWILGLTGGIGSGKSAAAEHFISLGVHLVDADHAARWVVEPGRPALAKIVERFGDGILLPDGQLDRAALRERIFQAPEERRWLEQLLHPLIGAEIVQYLARAESPYAILVSPLLVESGQRQMTHRVLVVDTPEHLQLQRTMLRDKVSEEQVRSILQAQARRDERLKHADDVLVNDGDLSHLQREVERLHAFYLTLRGGRA.

The DPCK domain maps to 6 to 203 (ILGLTGGIGS…FYLTLRGGRA (198 aa)). 14–19 (GSGKSA) contacts ATP.

Belongs to the CoaE family.

The protein resides in the cytoplasm. It carries out the reaction 3'-dephospho-CoA + ATP = ADP + CoA + H(+). Its pathway is cofactor biosynthesis; coenzyme A biosynthesis; CoA from (R)-pantothenate: step 5/5. Its function is as follows. Catalyzes the phosphorylation of the 3'-hydroxyl group of dephosphocoenzyme A to form coenzyme A. This Pseudomonas aeruginosa (strain ATCC 15692 / DSM 22644 / CIP 104116 / JCM 14847 / LMG 12228 / 1C / PRS 101 / PAO1) protein is Dephospho-CoA kinase.